Consider the following 444-residue polypeptide: MPVSSDPKTFYIETFGCQMNFHDSEKVVGTLISQGYRQVETELDAGLILYNTCSIRDKAEQKVFHRLSEFRQLQKEGKRFAVLGCVAQQEGEKIFERAPHVSLVAGSASYRNLAEMLVQIESGSQRITGLDDRETDQTFETEFTARGNAHRGYITIIEGCDKFCAYCVVPYTRGKERSRSAESVLREARQMADAGFTDVQLLGQNVNSYHDPSGTMTFAELLTAVGEITGIKRVRFTTSHPRDFTRDIVEAIDNHPTLCDHVHLPVQSGSSKVLREMFREYTREQYLERISWMKATKNRKLSITTDVIVGFPGETETEFEETLALLDHVQYDGVFSFKYSPRPNTPALKYIDTVPEQEKSRRLQILMEHQREIQRANYRKHIGETIEVMVEAENATRAQWIGRTSQNKTLNFTVPQTVQPEIGSYHQVLVTQAFPNSLVGELVG.

The MTTase N-terminal domain occupies 8-122 (KTFYIETFGC…LAEMLVQIES (115 aa)). Residues C17, C53, C85, C160, C164, and C167 each coordinate [4Fe-4S] cluster. Residues 146–376 (RGNAHRGYIT…MEHQREIQRA (231 aa)) enclose the Radical SAM core domain. One can recognise a TRAM domain in the interval 379–444 (RKHIGETIEV…PNSLVGELVG (66 aa)).

Belongs to the methylthiotransferase family. MiaB subfamily. In terms of assembly, monomer. Requires [4Fe-4S] cluster as cofactor.

It is found in the cytoplasm. The catalysed reaction is N(6)-dimethylallyladenosine(37) in tRNA + (sulfur carrier)-SH + AH2 + 2 S-adenosyl-L-methionine = 2-methylsulfanyl-N(6)-dimethylallyladenosine(37) in tRNA + (sulfur carrier)-H + 5'-deoxyadenosine + L-methionine + A + S-adenosyl-L-homocysteine + 2 H(+). Functionally, catalyzes the methylthiolation of N6-(dimethylallyl)adenosine (i(6)A), leading to the formation of 2-methylthio-N6-(dimethylallyl)adenosine (ms(2)i(6)A) at position 37 in tRNAs that read codons beginning with uridine. This is tRNA-2-methylthio-N(6)-dimethylallyladenosine synthase from Koribacter versatilis (strain Ellin345).